Consider the following 292-residue polypeptide: Phosphatidylglycerol--prolipoprotein diacylglyceryl transferase (292 aa).

4 consecutive transmembrane segments (helical) span residues Ile-7–Glu-27, Phe-45–Ala-65, Leu-83–Trp-103, and Ile-116–Ile-136. Position 165 (Arg-165) interacts with a 1,2-diacyl-sn-glycero-3-phospho-(1'-sn-glycerol). The next 2 helical transmembrane spans lie at Pro-204–Val-224 and Ala-264–Ile-284.

It belongs to the Lgt family.

Its subcellular location is the cell inner membrane. The catalysed reaction is L-cysteinyl-[prolipoprotein] + a 1,2-diacyl-sn-glycero-3-phospho-(1'-sn-glycerol) = an S-1,2-diacyl-sn-glyceryl-L-cysteinyl-[prolipoprotein] + sn-glycerol 1-phosphate + H(+). The protein operates within protein modification; lipoprotein biosynthesis (diacylglyceryl transfer). In terms of biological role, catalyzes the transfer of the diacylglyceryl group from phosphatidylglycerol to the sulfhydryl group of the N-terminal cysteine of a prolipoprotein, the first step in the formation of mature lipoproteins. In Fervidobacterium nodosum (strain ATCC 35602 / DSM 5306 / Rt17-B1), this protein is Phosphatidylglycerol--prolipoprotein diacylglyceryl transferase.